Reading from the N-terminus, the 58-residue chain is Keratin-associated protein 19-9b (58 aa).

The interval 6–52 (GNYYGGLGYGLGGFGGFGGLGYGYGSSYGLGGYGGYGYFSPSFYGGY) is 12 X 2 AA repeats of G-[YCGS].

This sequence belongs to the KRTAP type 19 family. As to quaternary structure, interacts with hair keratins.

Its function is as follows. In the hair cortex, hair keratin intermediate filaments are embedded in an interfilamentous matrix, consisting of hair keratin-associated proteins (KRTAP), which are essential for the formation of a rigid and resistant hair shaft through their extensive disulfide bond cross-linking with abundant cysteine residues of hair keratins. The matrix proteins include the high-sulfur and high-glycine-tyrosine keratins. The sequence is that of Keratin-associated protein 19-9b (Krtap19-9b) from Mus musculus (Mouse).